Here is a 68-residue protein sequence, read N- to C-terminus: Protein RH1 (68 aa).

The sequence is that of Protein RH1 from Pantherophis guttatus (Corn snake).